Here is a 145-residue protein sequence, read N- to C-terminus: Leghemoglobin-1 (145 aa).

In terms of domain architecture, Globin spans 3-145; the sequence is AFSDKQEALV…ELAAAIKKAY (143 aa). Nitrated tyrosine is present on residues Y26 and Y31. Position 46 (S46) interacts with heme b. A Phosphoserine modification is found at S46. H62 provides a ligand contact to O2. Heme b is bound by residues K65, H93, and K96. Y134 is modified (nitrated tyrosine).

It belongs to the plant globin family. Monomer. Nitrated in effective nodules and particularly in hypoxic conditions; this mechanism may play a protective role in the symbiosis by buffering toxic peroxynitrite NO(2)(-). Nitration level decrease during nodule senescence. In terms of processing, phosphorylation at Ser-46 disrupts the molecular environment of its porphyrin ring oxygen binding pocket, thus leading to a reduced oxygen consumption and to the delivery of oxygen O(2) to symbiosomes. As to expression, root nodules.

Its subcellular location is the cytoplasm. It localises to the cytosol. The protein localises to the nucleus. Leghemoglobin that reversibly binds oxygen O(2) through a pentacoordinated heme iron. In root nodules, facilitates the diffusion of oxygen to the bacteroids while preventing the bacterial nitrogenase from being inactivated by buffering dioxygen, nitric oxide and carbon monoxide, and promoting the formation of reactive oxygen species (ROS, e.g. H(2)O(2)). This role is essential for symbiotic nitrogen fixation (SNF). This Vigna unguiculata (Cowpea) protein is Leghemoglobin-1.